The following is a 252-amino-acid chain: MATGRTHRPATRSRGIPEATVARLPLYLRALTALSERSVPTVSSEELAAAAGVNSAKLRKDFSYLGSYGTRGVGYDVEYLVYQISRELGLTQDWPVVIVGIGNLGAALANYGGFASRGFRVAALIDADPAMAGKPVAGIPVQHTDELEKIIDGNGVSIGVIATPAGAAQQVCDRLVAAGVTSILNFAPTVLTVPDGVDVRKVDLSIELQILAFHEQRKAGEEAAAEGAIPAAASKESADKGPDGDVPAVMPA.

A DNA-binding region (H-T-H motif) is located at residues 26–65; it reads LYLRALTALSERSVPTVSSEELAAAAGVNSAKLRKDFSYL. An NAD(+)-binding site is contributed by 100 to 105; the sequence is GIGNLG. The tract at residues 222 to 252 is disordered; sequence EAAAEGAIPAAASKESADKGPDGDVPAVMPA.

It belongs to the transcriptional regulatory Rex family. As to quaternary structure, homodimer.

Its subcellular location is the cytoplasm. Functionally, modulates transcription in response to changes in cellular NADH/NAD(+) redox state. The polypeptide is Redox-sensing transcriptional repressor Rex (Streptomyces avermitilis (strain ATCC 31267 / DSM 46492 / JCM 5070 / NBRC 14893 / NCIMB 12804 / NRRL 8165 / MA-4680)).